We begin with the raw amino-acid sequence, 419 residues long: Tyrosine--tRNA ligase 2 (419 aa).

Tyr-34 contacts L-tyrosine. Residues 39 to 48 (PTGDSMHIGH) carry the 'HIGH' region motif. L-tyrosine contacts are provided by Tyr-168 and Gln-172. The short motif at 230-234 (KFGKS) is the 'KMSKS' region element. Position 233 (Lys-233) interacts with ATP. An S4 RNA-binding domain is found at 352-418 (KNIVEWLVDL…GKKNYSLVKL (67 aa)).

Belongs to the class-I aminoacyl-tRNA synthetase family. TyrS type 1 subfamily. As to quaternary structure, homodimer.

The protein localises to the cytoplasm. It catalyses the reaction tRNA(Tyr) + L-tyrosine + ATP = L-tyrosyl-tRNA(Tyr) + AMP + diphosphate + H(+). Its function is as follows. Catalyzes the attachment of tyrosine to tRNA(Tyr) in a two-step reaction: tyrosine is first activated by ATP to form Tyr-AMP and then transferred to the acceptor end of tRNA(Tyr). In Bacillus anthracis, this protein is Tyrosine--tRNA ligase 2.